Reading from the N-terminus, the 1228-residue chain is DNA-directed RNA polymerase subunit beta'' (1228 aa).

4 residues coordinate Zn(2+): Cys-222, Cys-296, Cys-303, and Cys-306.

It belongs to the RNA polymerase beta' chain family. RpoC2 subfamily. As to quaternary structure, in plastids the minimal PEP RNA polymerase catalytic core is composed of four subunits: alpha, beta, beta', and beta''. When a (nuclear-encoded) sigma factor is associated with the core the holoenzyme is formed, which can initiate transcription. Zn(2+) serves as cofactor.

It localises to the plastid. It is found in the chloroplast. It carries out the reaction RNA(n) + a ribonucleoside 5'-triphosphate = RNA(n+1) + diphosphate. Functionally, DNA-dependent RNA polymerase catalyzes the transcription of DNA into RNA using the four ribonucleoside triphosphates as substrates. The polypeptide is DNA-directed RNA polymerase subunit beta'' (Gracilaria tenuistipitata var. liui (Red alga)).